Consider the following 50-residue polypeptide: Large ribosomal subunit protein bL33 (50 aa).

Belongs to the bacterial ribosomal protein bL33 family.

This chain is Large ribosomal subunit protein bL33, found in Fusobacterium nucleatum subsp. nucleatum (strain ATCC 25586 / DSM 15643 / BCRC 10681 / CIP 101130 / JCM 8532 / KCTC 2640 / LMG 13131 / VPI 4355).